Here is a 117-residue protein sequence, read N- to C-terminus: MTRIKRGYIARRRRTKLRLFASSFRGAHSRLTRTMTQQRIRALVSAHRDRGKRKRDFRRLWITRINAVIHETGVFYSYNRFIHNLYKKQLLLNRKILAQIALLNRSCLYTISNEIKE.

It belongs to the bacterial ribosomal protein bL20 family.

The protein resides in the plastid. Its subcellular location is the chloroplast. In terms of biological role, binds directly to 23S ribosomal RNA and is necessary for the in vitro assembly process of the 50S ribosomal subunit. It is not involved in the protein synthesizing functions of that subunit. The protein is Large ribosomal subunit protein bL20c of Draba nemorosa (Woodland whitlowgrass).